Consider the following 413-residue polypeptide: Serine hydroxymethyltransferase (413 aa).

(6S)-5,6,7,8-tetrahydrofolate contacts are provided by residues leucine 115 and 119-121; that span reads GHL. Residue lysine 224 is modified to N6-(pyridoxal phosphate)lysine.

Belongs to the SHMT family. Homodimer. Pyridoxal 5'-phosphate serves as cofactor.

It is found in the cytoplasm. The catalysed reaction is (6R)-5,10-methylene-5,6,7,8-tetrahydrofolate + glycine + H2O = (6S)-5,6,7,8-tetrahydrofolate + L-serine. The protein operates within one-carbon metabolism; tetrahydrofolate interconversion. It functions in the pathway amino-acid biosynthesis; glycine biosynthesis; glycine from L-serine: step 1/1. Its function is as follows. Catalyzes the reversible interconversion of serine and glycine with tetrahydrofolate (THF) serving as the one-carbon carrier. This reaction serves as the major source of one-carbon groups required for the biosynthesis of purines, thymidylate, methionine, and other important biomolecules. Also exhibits THF-independent aldolase activity toward beta-hydroxyamino acids, producing glycine and aldehydes, via a retro-aldol mechanism. This is Serine hydroxymethyltransferase from Mycoplasma capricolum subsp. capricolum (strain California kid / ATCC 27343 / NCTC 10154).